The following is a 268-amino-acid chain: Undecaprenyl-diphosphatase (268 aa).

Transmembrane regions (helical) follow at residues 41 to 61 (PGPSLSAIIQLGSVLALVCYF), 89 to 109 (IFIGTIPIILLGGTIKLFVPY), 114 to 134 (IFRSNLSIALVSFLMAILMYI), 155 to 175 (LIGLSQALAIFPGVSRSGVTI), 191 to 211 (FSFLLGMPAISFAAIVEFISS), 218 to 238 (FSFFPLIVGLTTTFLSSLLAI), and 248 to 268 (NGLKLFIIYRIVFGFVILLNL).

It belongs to the UppP family.

It is found in the cell inner membrane. The catalysed reaction is di-trans,octa-cis-undecaprenyl diphosphate + H2O = di-trans,octa-cis-undecaprenyl phosphate + phosphate + H(+). In terms of biological role, catalyzes the dephosphorylation of undecaprenyl diphosphate (UPP). Confers resistance to bacitracin. The polypeptide is Undecaprenyl-diphosphatase (Prochlorococcus marinus (strain MIT 9312)).